The sequence spans 1133 residues: DNA-directed RNA polymerase III subunit RPC2 (1133 aa).

Lys-186 is an RNA binding site. Arg-195 is a DNA binding site. Arg-213 serves as a coordination point for RNA. A DNA-binding site is contributed by Asp-432. 2 residues coordinate RNA: Gln-438 and Gln-692. Asp-753 lines the Mg(2+) pocket. Residues Lys-896, Lys-904, and Lys-1019 each contribute to the RNA site. The DNA site is built by Arg-1039, Ser-1040, and Arg-1046. Residues Cys-1080, Cys-1083, Cys-1092, and Cys-1095 each coordinate Zn(2+). The segment at 1080 to 1095 (CGQCGLLGYSGWCHYC) adopts a C4-type zinc-finger fold.

This sequence belongs to the RNA polymerase beta chain family. As to quaternary structure, component of the RNA polymerase III (Pol III) complex consisting of 17 subunits: a ten-subunit catalytic core composed of POLR3A/RPC1, POLR3B/RPC2, POLR1C/RPAC1, POLR1D/RPAC2, POLR3K/RPC10, POLR2E/RPABC1, POLR2F/RPABC2, POLR2H/RPABC3, POLR2K/RPABC4 and POLR2L/RPABC5; a mobile stalk composed of two subunits POLR3H/RPC8 and CRCP/RPC9, protruding from the core and functioning primarily in transcription initiation; and additional subunits homologous to general transcription factors of the RNA polymerase II machinery, POLR3C/RPC3-POLR3F/RPC6-POLR3G/RPC7 heterotrimer required for transcription initiation and POLR3D/RPC4-POLR3E/RPC5 heterodimer involved in both transcription initiation and termination. Requires Mg(2+) as cofactor.

The protein resides in the nucleus. Its subcellular location is the cytoplasm. The protein localises to the cytosol. The catalysed reaction is RNA(n) + a ribonucleoside 5'-triphosphate = RNA(n+1) + diphosphate. In terms of biological role, catalytic core component of RNA polymerase III (Pol III), a DNA-dependent RNA polymerase which synthesizes small non-coding RNAs using the four ribonucleoside triphosphates as substrates. Synthesizes 5S rRNA, snRNAs, tRNAs and miRNAs from at least 500 distinct genomic loci. Pol III-mediated transcription cycle proceeds through transcription initiation, transcription elongation and transcription termination stages. During transcription initiation, Pol III is recruited to DNA promoters type I, II or III with the help of general transcription factors and other specific initiation factors. Once the polymerase has escaped from the promoter it enters the elongation phase during which RNA is actively polymerized, based on complementarity with the template DNA strand. Transcription termination involves the release of the RNA transcript and polymerase from the DNA. Forms Pol III active center together with the largest subunit POLR3A/RPC1. A single-stranded DNA template strand of the promoter is positioned within the central active site cleft of Pol III. Appends one nucleotide at a time to the 3' end of the nascent RNA, with POLR3A/RPC1 contributing a Mg(2+)-coordinating DxDGD motif, and POLR3B/RPC2 participating in the coordination of a second Mg(2+) ion and providing lysine residues believed to facilitate Watson-Crick base pairing between the incoming nucleotide and template base. Typically, Mg(2+) ions direct a 5' nucleoside triphosphate to form a phosphodiester bond with the 3' hydroxyl of the preceding nucleotide of the nascent RNA, with the elimination of pyrophosphate. Pol III plays a key role in sensing and limiting infection by intracellular bacteria and DNA viruses. Acts as a nuclear and cytosolic DNA sensor involved in innate immune response. Can sense non-self dsDNA that serves as template for transcription into dsRNA. The non-self RNA polymerase III transcripts, such as Epstein-Barr virus-encoded RNAs (EBERs) induce type I interferon and NF-kappa-B through the RIG-I pathway. The polypeptide is DNA-directed RNA polymerase III subunit RPC2 (Homo sapiens (Human)).